A 485-amino-acid chain; its full sequence is MQWEVVIGLETHTQLSTASKIFSGTSTAFGAEPNTQASPVDLALPGVLPVLNKGAVERAIQFGLAIGATIAPRSIFARKNYFYPDLPKGYQISQYEIPVVQGGSITIQVEGKKGEVYEKTVQLTRAHLEEDAGKSLHEDFAGMTGIDLNRAGTPLLEIVTEPDMRSAAEAVAYAKALHSLVVWLGICDGNMQEGSFRCDANVSVRPVGQKEFGTRREIKNLNSFRFLQQAIEYEVQWQINEIEDGRKIQQATVLFDPDTGETRAMRTKEDAHDYRYFPDPDLMPLEIDAAWIERVRGELPELPAAMQARFVSQYGLSAYDASTLTASKAMASYYEAVVAEVGAANAKPAANWLMGDVASQLNREGISIDAAPVKPLQLARLLARIADGTVSNNTAKKDVFPAMWAGESNGDADAIIAAKGLKQMSDTGELEKIIDDVLAANAKSVEEFRAGKEKAFNALVGQAMKATKGKANPAQVNELLKKKLG.

It belongs to the GatB/GatE family. GatB subfamily. As to quaternary structure, heterotrimer of A, B and C subunits.

It catalyses the reaction L-glutamyl-tRNA(Gln) + L-glutamine + ATP + H2O = L-glutaminyl-tRNA(Gln) + L-glutamate + ADP + phosphate + H(+). The catalysed reaction is L-aspartyl-tRNA(Asn) + L-glutamine + ATP + H2O = L-asparaginyl-tRNA(Asn) + L-glutamate + ADP + phosphate + 2 H(+). Its function is as follows. Allows the formation of correctly charged Asn-tRNA(Asn) or Gln-tRNA(Gln) through the transamidation of misacylated Asp-tRNA(Asn) or Glu-tRNA(Gln) in organisms which lack either or both of asparaginyl-tRNA or glutaminyl-tRNA synthetases. The reaction takes place in the presence of glutamine and ATP through an activated phospho-Asp-tRNA(Asn) or phospho-Glu-tRNA(Gln). The polypeptide is Aspartyl/glutamyl-tRNA(Asn/Gln) amidotransferase subunit B (Cupriavidus pinatubonensis (strain JMP 134 / LMG 1197) (Cupriavidus necator (strain JMP 134))).